The following is a 181-amino-acid chain: Adenine phosphoribosyltransferase (181 aa).

Belongs to the purine/pyrimidine phosphoribosyltransferase family. Homodimer.

The protein localises to the cytoplasm. It catalyses the reaction AMP + diphosphate = 5-phospho-alpha-D-ribose 1-diphosphate + adenine. The protein operates within purine metabolism; AMP biosynthesis via salvage pathway; AMP from adenine: step 1/1. Its function is as follows. Catalyzes a salvage reaction resulting in the formation of AMP, that is energically less costly than de novo synthesis. The polypeptide is Adenine phosphoribosyltransferase (Colwellia psychrerythraea (strain 34H / ATCC BAA-681) (Vibrio psychroerythus)).